We begin with the raw amino-acid sequence, 500 residues long: Glutelin type-B 4 (500 aa).

The first 24 residues, 1-24 (MATIAFSRLSIYFCVLLLCHGSMA), serve as a signal peptide directing secretion. Disulfide bonds link cysteine 45–cysteine 78 and cysteine 121–cysteine 310. 2 consecutive Cupin type-1 domains span residues 50-245 (LQAF…LVAK) and 316-465 (LNIE…EQAR). Polar residues predominate over residues 481–493 (RYQQQTYPGFSNE). The interval 481–500 (RYQQQTYPGFSNESENEALE) is disordered.

It belongs to the 11S seed storage protein (globulins) family. As to quaternary structure, hexamer; each subunit is composed of an acidic and a basic chain derived from a single precursor and linked by a disulfide bond. As to expression, expressed in endosperm (at protein level).

In terms of biological role, seed storage protein. The chain is Glutelin type-B 4 (GLUB4) from Oryza sativa subsp. japonica (Rice).